The primary structure comprises 359 residues: Quinolinate synthase (359 aa).

2 residues coordinate iminosuccinate: His-81 and Ser-99. Cys-144 contacts [4Fe-4S] cluster. Iminosuccinate-binding positions include 170-172 (YVN) and Ser-187. Cys-229 provides a ligand contact to [4Fe-4S] cluster. Residues 255-257 (HPE) and Thr-272 contribute to the iminosuccinate site. Cys-315 is a binding site for [4Fe-4S] cluster.

Belongs to the quinolinate synthase family. Type 2 subfamily. It depends on [4Fe-4S] cluster as a cofactor.

It localises to the cytoplasm. The catalysed reaction is iminosuccinate + dihydroxyacetone phosphate = quinolinate + phosphate + 2 H2O + H(+). It participates in cofactor biosynthesis; NAD(+) biosynthesis; quinolinate from iminoaspartate: step 1/1. In terms of biological role, catalyzes the condensation of iminoaspartate with dihydroxyacetone phosphate to form quinolinate. The protein is Quinolinate synthase of Sinorhizobium medicae (strain WSM419) (Ensifer medicae).